A 147-amino-acid chain; its full sequence is Endoribonuclease YbeY (147 aa).

Positions 111, 115, and 121 each coordinate Zn(2+).

The protein belongs to the endoribonuclease YbeY family. Requires Zn(2+) as cofactor.

The protein localises to the cytoplasm. Single strand-specific metallo-endoribonuclease involved in late-stage 70S ribosome quality control and in maturation of the 3' terminus of the 16S rRNA. In Amoebophilus asiaticus (strain 5a2), this protein is Endoribonuclease YbeY.